Consider the following 461-residue polypeptide: Adenine DNA glycosylase (461 aa).

The Proton donor/acceptor role is filled by E69. [4Fe-4S] cluster is bound by residues C226, C233, C236, and C242. The region spanning 296 to 437 (QREERALVVI…RAALEIKKRK (142 aa)) is the Nudix hydrolase domain. The Nudix box motif lies at 340–366 (FGQESWPKDMDAEFQKSIAQWISNDSR).

The protein belongs to the Nth/MutY family. Monomer. [4Fe-4S] cluster is required as a cofactor.

The catalysed reaction is Hydrolyzes free adenine bases from 7,8-dihydro-8-oxoguanine:adenine mismatched double-stranded DNA, leaving an apurinic site.. Functionally, adenine glycosylase active on G-A mispairs. Has glycosylase and nicking activities and is active at A/G and A/GO sites. The chain is Adenine DNA glycosylase (myh1) from Schizosaccharomyces pombe (strain 972 / ATCC 24843) (Fission yeast).